Reading from the N-terminus, the 441-residue chain is tRNA pseudouridine synthase Pus10 (441 aa).

Asp268 functions as the Nucleophile in the catalytic mechanism. The substrate site is built by Tyr333 and Tyr405.

This sequence belongs to the pseudouridine synthase Pus10 family.

The catalysed reaction is uridine(54) in tRNA = pseudouridine(54) in tRNA. It carries out the reaction uridine(55) in tRNA = pseudouridine(55) in tRNA. Responsible for synthesis of pseudouridine from uracil-54 and uracil-55 in the psi GC loop of transfer RNAs. This chain is tRNA pseudouridine synthase Pus10, found in Thermosphaera aggregans (strain DSM 11486 / M11TL).